Consider the following 612-residue polypeptide: FAD-linked oxidoreductase easE (612 aa).

The region spanning His-129 to Asp-313 is the FAD-binding PCMH-type domain.

Belongs to the oxygen-dependent FAD-linked oxidoreductase family. It depends on FAD as a cofactor.

It functions in the pathway alkaloid biosynthesis; ergot alkaloid biosynthesis. Functionally, FAD-linked oxidoreductase; part of the gene cluster that mediates the biosynthesis of fungal ergot alkaloid. DmaW catalyzes the first step of ergot alkaloid biosynthesis by condensing dimethylallyl diphosphate (DMAP) and tryptophan to form 4-dimethylallyl-L-tryptophan. The second step is catalyzed by the methyltransferase easF that methylates 4-dimethylallyl-L-tryptophan in the presence of S-adenosyl-L-methionine, resulting in the formation of 4-dimethylallyl-L-abrine. The catalase easC and the FAD-dependent oxidoreductase easE then transform 4-dimethylallyl-L-abrine to chanoclavine-I which is further oxidized by easD in the presence of NAD(+), resulting in the formation of chanoclavine-I aldehyde. Chanoclavine-I aldehyde is the precursor of ergoamides and ergopeptines in Clavicipitaceae, and clavine-type alcaloids such as fumiclavine in Trichocomaceae. However, the metabolites downstream of chanoclavine-I aldehyde in Arthrodermataceae have not been identified yet. This is FAD-linked oxidoreductase easE from Arthroderma otae (strain ATCC MYA-4605 / CBS 113480) (Microsporum canis).